The primary structure comprises 429 residues: Histidinol dehydrogenase (429 aa).

Y127, Q188, and N211 together coordinate NAD(+). Positions 234, 256, and 259 each coordinate substrate. Zn(2+) contacts are provided by Q256 and H259. Active-site proton acceptor residues include E324 and H325. Substrate is bound by residues H325, D358, E412, and H417. Zn(2+) is bound at residue D358. H417 contacts Zn(2+).

Belongs to the histidinol dehydrogenase family. Requires Zn(2+) as cofactor.

It carries out the reaction L-histidinol + 2 NAD(+) + H2O = L-histidine + 2 NADH + 3 H(+). It functions in the pathway amino-acid biosynthesis; L-histidine biosynthesis; L-histidine from 5-phospho-alpha-D-ribose 1-diphosphate: step 9/9. Catalyzes the sequential NAD-dependent oxidations of L-histidinol to L-histidinaldehyde and then to L-histidine. The chain is Histidinol dehydrogenase from Bacillus anthracis.